Here is a 275-residue protein sequence, read N- to C-terminus: Myb/SANT-like DNA-binding domain-containing protein 3 (275 aa).

One can recognise a Myb-like domain in the interval 13-78 (FSELEKSILL…QLKKCWENIK (66 aa)). A phosphoserine mark is found at serine 96 and serine 98. Lysine 154 participates in a covalent cross-link: Glycyl lysine isopeptide (Lys-Gly) (interchain with G-Cter in SUMO2). A coiled-coil region spans residues 211-247 (QLIQMNEVHVAKIQQIERECEMAEEEHRIKMEVLNKK). Serine 274 carries the phosphoserine modification.

This sequence belongs to the MSANTD3 family.

The sequence is that of Myb/SANT-like DNA-binding domain-containing protein 3 (MSANTD3) from Bos taurus (Bovine).